A 123-amino-acid chain; its full sequence is Modulator protein MzrA (123 aa).

Over methionine 1–glutamine 8 the chain is Cytoplasmic. A helical membrane pass occupies residues tyrosine 9–valine 29. Over arginine 30–glycine 123 the chain is Periplasmic.

It belongs to the MzrA family. Interacts with EnvZ.

It is found in the cell inner membrane. In terms of biological role, modulates the activity of the EnvZ/OmpR two-component regulatory system, probably by directly modulating EnvZ enzymatic activity and increasing stability of phosphorylated OmpR. The chain is Modulator protein MzrA from Serratia proteamaculans (strain 568).